Reading from the N-terminus, the 79-residue chain is MKLTCMVIITVLFLTASQLITADYSRDQRQYRAVRLGDEMRNFKGARDCGGQGEGCYTQPCCPGLRCRGGGTGGGSCQP.

The signal sequence occupies residues 1 to 22 (MKLTCMVIITVLFLTASQLITA). Residues 23–47 (DYSRDQRQYRAVRLGDEMRNFKGAR) constitute a propeptide that is removed on maturation. Disulfide bonds link Cys-49–Cys-62, Cys-56–Cys-67, and Cys-61–Cys-77. Pro-60 and Pro-63 each carry 4-hydroxyproline.

The protein belongs to the conotoxin O1 superfamily. Expressed by the venom duct.

The protein localises to the secreted. In terms of biological role, ion channel inhibitor that inhibits the increase in intracellular calcium upon depolarization in DRG neurons. In vivo, both intraperitoneal and intracranial injections into mice induce hyperactivity. This Conus virgo (Virgin cone) protein is Conotoxin Vi6.9.